A 399-amino-acid polypeptide reads, in one-letter code: Phosphoglycerate kinase (399 aa).

Substrate-binding positions include 24–26, R41, 64–67, R123, and R160; these read DLN and HLGR. Residues K210, G298, E329, and 355–358 each bind ATP; that span reads GGDS.

It belongs to the phosphoglycerate kinase family. Monomer.

The protein resides in the cytoplasm. The catalysed reaction is (2R)-3-phosphoglycerate + ATP = (2R)-3-phospho-glyceroyl phosphate + ADP. It participates in carbohydrate degradation; glycolysis; pyruvate from D-glyceraldehyde 3-phosphate: step 2/5. This is Phosphoglycerate kinase from Salinispora arenicola (strain CNS-205).